The chain runs to 147 residues: Ponticulin-like protein C2 (147 aa).

The signal sequence occupies residues 1–20 (MKFTKPLLLLIVAIIASSNA). Residue Asn118 is the site of GPI-like-anchor amidated asparagine attachment. The N-linked (GlcNAc...) asparagine glycan is linked to Asn118. The propeptide at 119–147 (SSESDSSDSTRIGASFALFALALLSMLAL) is removed in mature form.

This sequence belongs to the ponticulin family. Post-translationally, the GPI-like-anchor contains a phosphoceramide group, rather than a phosphatidyl group.

It is found in the cell membrane. This Dictyostelium discoideum (Social amoeba) protein is Ponticulin-like protein C2 (ponC2).